The primary structure comprises 155 residues: 2-C-methyl-D-erythritol 2,4-cyclodiphosphate synthase (155 aa).

Residues Asp8 and His10 each coordinate a divalent metal cation. 4-CDP-2-C-methyl-D-erythritol 2-phosphate is bound by residues 8–10 (DVH) and 34–35 (HS). His42 serves as a coordination point for a divalent metal cation. Residues 56–58 (DIG), 61–65 (FPDKD), 132–135 (TTTE), and Arg142 contribute to the 4-CDP-2-C-methyl-D-erythritol 2-phosphate site.

It belongs to the IspF family. In terms of assembly, homotrimer. It depends on a divalent metal cation as a cofactor.

It carries out the reaction 4-CDP-2-C-methyl-D-erythritol 2-phosphate = 2-C-methyl-D-erythritol 2,4-cyclic diphosphate + CMP. The protein operates within isoprenoid biosynthesis; isopentenyl diphosphate biosynthesis via DXP pathway; isopentenyl diphosphate from 1-deoxy-D-xylulose 5-phosphate: step 4/6. Its function is as follows. Involved in the biosynthesis of isopentenyl diphosphate (IPP) and dimethylallyl diphosphate (DMAPP), two major building blocks of isoprenoid compounds. Catalyzes the conversion of 4-diphosphocytidyl-2-C-methyl-D-erythritol 2-phosphate (CDP-ME2P) to 2-C-methyl-D-erythritol 2,4-cyclodiphosphate (ME-CPP) with a corresponding release of cytidine 5-monophosphate (CMP). The chain is 2-C-methyl-D-erythritol 2,4-cyclodiphosphate synthase from Desulfatibacillum aliphaticivorans.